The primary structure comprises 371 residues: Cytochrome b (371 aa).

The next 4 helical transmembrane spans lie at 25 to 45 (FGSM…FLAI), 69 to 90 (WIMQ…YIHI), 105 to 125 (WLSG…GYVL), and 170 to 190 (FFAL…IHIM). 2 residues coordinate heme b: histidine 75 and histidine 89. 2 residues coordinate heme b: histidine 174 and histidine 188. Histidine 193 contacts a ubiquinone. The next 4 helical transmembrane spans lie at 218–238 (HKDI…MSFS), 280–300 (LGGT…PFTH), 312–332 (IMQL…WAAT), and 339–358 (FTII…IMNP).

Belongs to the cytochrome b family. The cytochrome bc1 complex contains 3 respiratory subunits (MT-CYB, CYC1 and UQCRFS1), 2 core proteins (UQCRC1 and UQCRC2) and probably 6 low-molecular weight proteins. Heme b serves as cofactor.

The protein localises to the mitochondrion inner membrane. Component of the ubiquinol-cytochrome c reductase complex (complex III or cytochrome b-c1 complex) that is part of the mitochondrial respiratory chain. The b-c1 complex mediates electron transfer from ubiquinol to cytochrome c. Contributes to the generation of a proton gradient across the mitochondrial membrane that is then used for ATP synthesis. The sequence is that of Cytochrome b (MT-CYB) from Coluber constrictor (Eastern racer).